Consider the following 552-residue polypeptide: MKALWLENINESLVKDFYETQTEEEQNAGFEGVLSFGTAGIRSTFGLGPARLNAFTVRKVALGLAQYLNHNVDDASVVIHFDTRFLSKAFSQEMASVLANNGITAIISDNYKSTPELSFAVRHLQVNAGIMITASHNPKNYNGIKIYNEKGGQLLPEASEQLSEYINSIETPLNIEKGDFNAFVENGKIKYMSNEVTESYKKEVKSLVGSIDAHDAKVILTSLHGTSLPLVSDILTELDYHNFVIEKEQSEPNGNFPTVAIANPEDEAAFTLGKQLADKTDAQLIIATDPDADRLGFIERYGDNDFRYFNGNEIGLLLMKLRFQDLTEDSTPQYMIKSIVTSELAERLATSLNVEVNDVLTGFKFISDLIEHKQKDDDKQLLLAFEESHGYLAQPISRDKDAIQMVPLLVKYKNLLDKNGITFKETIEDIYENIGYFKDRTLAPTFEGKAGVKKIESIMSQFRNEQVFSICGMDVLKIEDYHVGEVRDMITGHTEKLTLPKTNLIRFIFENGFIALRPSGTEPKIKLYFSLEVENIDEITQQFEANYINNIV.

Catalysis depends on S135, which acts as the Phosphoserine intermediate. Residues S135, D289, D291, and D293 each coordinate Mg(2+).

The protein belongs to the phosphohexose mutase family. Requires Mg(2+) as cofactor.

It catalyses the reaction alpha-D-glucose 1-phosphate = alpha-D-glucose 6-phosphate. It participates in glycolipid metabolism; diglucosyl-diacylglycerol biosynthesis. In terms of biological role, catalyzes the interconversion between glucose-6-phosphate and alpha-glucose-1-phosphate. This is the first step in the biosynthesis of diglucosyl-diacylglycerol (Glc2-DAG), i.e. a glycolipid found in the membrane, which is also used as a membrane anchor for lipoteichoic acid (LTA). This is Phosphoglucomutase (pgcA) from Staphylococcus saprophyticus subsp. saprophyticus (strain ATCC 15305 / DSM 20229 / NCIMB 8711 / NCTC 7292 / S-41).